Here is a 215-residue protein sequence, read N- to C-terminus: Myelin protein zero-like protein 2 (215 aa).

The first 26 residues, 1 to 26 (MYGKSSTRAVLLLLGIQLTALWPIAA), serve as a signal peptide directing secretion. The 115-residue stretch at 27–141 (VEIYTSRVLE…DGVIGEIRLS (115 aa)) folds into the Ig-like V-type domain. Topologically, residues 27-154 (VEIYTSRVLE…TVRFSEIHFL (128 aa)) are extracellular. N-linked (GlcNAc...) asparagine glycans are attached at residues Asn-39 and Asn-118. Cys-47 and Cys-123 are oxidised to a cystine. Residues 155–175 (ALAIGSACALMIIIVIVVVLF) form a helical membrane-spanning segment. At 176–215 (QHYRKKRWAERAHKVVEIKSKEEERLNQEKKVSVYLEDTD) the chain is on the cytoplasmic side.

The protein belongs to the myelin P0 protein family. As to expression, widely expressed. In fetal tissues, highest expression in the inner ear. In adult tissues, highest levels in thymus and lung.

The protein localises to the membrane. Mediates homophilic cell-cell adhesion. The chain is Myelin protein zero-like protein 2 (MPZL2) from Homo sapiens (Human).